We begin with the raw amino-acid sequence, 513 residues long: ATP synthase subunit alpha (513 aa).

169–176 (GDRQTGKT) is an ATP binding site.

It belongs to the ATPase alpha/beta chains family. F-type ATPases have 2 components, CF(1) - the catalytic core - and CF(0) - the membrane proton channel. CF(1) has five subunits: alpha(3), beta(3), gamma(1), delta(1), epsilon(1). CF(0) has three main subunits: a(1), b(2) and c(9-12). The alpha and beta chains form an alternating ring which encloses part of the gamma chain. CF(1) is attached to CF(0) by a central stalk formed by the gamma and epsilon chains, while a peripheral stalk is formed by the delta and b chains.

The protein localises to the cell inner membrane. The catalysed reaction is ATP + H2O + 4 H(+)(in) = ADP + phosphate + 5 H(+)(out). In terms of biological role, produces ATP from ADP in the presence of a proton gradient across the membrane. The alpha chain is a regulatory subunit. This is ATP synthase subunit alpha from Actinobacillus pleuropneumoniae serotype 3 (strain JL03).